The sequence spans 515 residues: 2-isopropylmalate synthase (515 aa).

The Pyruvate carboxyltransferase domain occupies 5 to 267 (VIIFDTTLRD…DTRINTQEIH (263 aa)). Mn(2+)-binding residues include Asp14, His202, His204, and Asn238. Residues 392 to 515 (VLDKLSAHST…VADIKSHKHH (124 aa)) form a regulatory domain region.

This sequence belongs to the alpha-IPM synthase/homocitrate synthase family. LeuA type 1 subfamily. As to quaternary structure, homodimer. Mn(2+) serves as cofactor.

It is found in the cytoplasm. The enzyme catalyses 3-methyl-2-oxobutanoate + acetyl-CoA + H2O = (2S)-2-isopropylmalate + CoA + H(+). It functions in the pathway amino-acid biosynthesis; L-leucine biosynthesis; L-leucine from 3-methyl-2-oxobutanoate: step 1/4. Catalyzes the condensation of the acetyl group of acetyl-CoA with 3-methyl-2-oxobutanoate (2-ketoisovalerate) to form 3-carboxy-3-hydroxy-4-methylpentanoate (2-isopropylmalate). This Haemophilus influenzae (strain 86-028NP) protein is 2-isopropylmalate synthase.